Reading from the N-terminus, the 131-residue chain is Holo-[acyl-carrier-protein] synthase (131 aa).

Residues D8 and E59 each coordinate Mg(2+).

Belongs to the P-Pant transferase superfamily. AcpS family. It depends on Mg(2+) as a cofactor.

The protein resides in the cytoplasm. It catalyses the reaction apo-[ACP] + CoA = holo-[ACP] + adenosine 3',5'-bisphosphate + H(+). Transfers the 4'-phosphopantetheine moiety from coenzyme A to a Ser of acyl-carrier-protein. The chain is Holo-[acyl-carrier-protein] synthase from Rickettsia massiliae (strain Mtu5).